The chain runs to 122 residues: UPF0102 protein CE1920 (122 aa).

This sequence belongs to the UPF0102 family.

This Corynebacterium efficiens (strain DSM 44549 / YS-314 / AJ 12310 / JCM 11189 / NBRC 100395) protein is UPF0102 protein CE1920.